Consider the following 241-residue polypeptide: Large ribosomal subunit protein uL2 (241 aa).

Positions 201–241 (VDHPHGGGNRQHPGRPTTVSRHAPPGRKVGSIAAKRTGLKR) are disordered.

It belongs to the universal ribosomal protein uL2 family. In terms of assembly, part of the 50S ribosomal subunit. Forms a bridge to the 30S subunit in the 70S ribosome.

One of the primary rRNA binding proteins. Required for association of the 30S and 50S subunits to form the 70S ribosome, for tRNA binding and peptide bond formation. It has been suggested to have peptidyltransferase activity; this is somewhat controversial. Makes several contacts with the 16S rRNA in the 70S ribosome. In Methanobrevibacter smithii (strain ATCC 35061 / DSM 861 / OCM 144 / PS), this protein is Large ribosomal subunit protein uL2.